The primary structure comprises 1028 residues: Contactin-6 (1028 aa).

The signal sequence occupies residues 1-19 (MRLLWKLVILLPLINSCAG). Ig-like C2-type domains lie at 32 to 117 (PQDV…AKLQ), 122 to 208 (EDFE…RSVQ), 227 to 308 (PKIE…RNLA), 318 to 402 (PEWE…AELR), 408 to 502 (PDFS…RTII), and 500 to 587 (TIIT…ERLS). 6 disulfide bridges follow: C50-C100, C144-C196, C249-C297, C339-C386, C431-C479, and C521-C577. N-linked (GlcNAc...) asparagine glycans are attached at residues N65 and N193. N-linked (GlcNAc...) asparagine glycosylation is found at N368, N377, and N468. 4 Fibronectin type-III domains span residues 600 to 698 (PPED…TKAS), 703 to 800 (APGN…SGED), 805 to 901 (APRG…TKKS), and 902 to 996 (PPSQ…KMSS). N659, N765, N860, and N865 each carry an N-linked (GlcNAc...) asparagine glycan. Y882 is modified (phosphotyrosine). 4 N-linked (GlcNAc...) asparagine glycosylation sites follow: N895, N931, N956, and N957. S999 is lipidated: GPI-anchor amidated serine. A propeptide spans 1000–1028 (TGVQISKPSTQSLSMVGVFYCFAIHPLSR) (removed in mature form).

It belongs to the immunoglobulin superfamily. Contactin family. As to quaternary structure, interacts with PTPRG. As to expression, expressed in brain. In brain, it is preferentially expressed in the accessory olfactory bulb, layers II/III and V of the cerebral cortex, piriform cortex, anterior thalamic nuclei, locus coeruleus of the pons and mesencephalic trigeminal nucleus and in Purkinje cells of the cerebellum.

The protein resides in the cell membrane. In terms of biological role, contactins mediate cell surface interactions during nervous system development. Participates in oligodendrocytes generation by acting as a ligand of NOTCH1. Its association with NOTCH1 promotes NOTCH1 activation through the released notch intracellular domain (NICD) and subsequent translocation to the nucleus. Involved in motor coordination. The polypeptide is Contactin-6 (Cntn6) (Mus musculus (Mouse)).